The sequence spans 1682 residues: PHD and RING finger domain-containing protein 1 (1682 aa).

A disordered region spans residues 1 to 81 (MDDDNLDELV…SGSEDSEDGV (81 aa)). Acidic residues predominate over residues 41 to 81 (DSEDDTGSEQDDDTDGEETEGLSEEEDPEDRSGSEDSEDGV). An RING-type; degenerate zinc finger spans residues 109-150 (CPICLNAFRDQAVGTPETCAHYFCLDCIIEWSRNANSCPVDR). The PHD-type zinc-finger motif lies at 185 to 235 (PTFCEVCGRSDREDRLLLCDGCDAGYHMECLDPPLQEVPVDEWFCPECTVP). 5 disordered regions span residues 330–412 (PLTP…SMPS), 444–483 (PFDSNEEQSADPPSPLSAKRRVLSRSALQSHQPVARPVAM), 532–582 (SLSA…RQPN), 605–774 (VRSD…GSSF), and 825–856 (LKSEIYDPFDPTGSDSSPPSSSPESLGPGLLP). At Thr332 the chain carries Phosphothreonine. Basic residues-rich tracts occupy residues 336-361 (PAKRKRKAGRRKKVLGRKKTRSRSSV) and 369-384 (RAKKRQHRVRKTKGRK). Ser447 and Ser457 each carry phosphoserine. 3 stretches are compositionally biased toward polar residues: residues 609 to 620 (PSLTPRSGLSRT), 630 to 667 (THSSSPQLNGSNVRVSSASTKIVTHSSFPSKNTASGLP), and 734 to 748 (SSRGPQETGSHTSGS). Residues 832–856 (PFDPTGSDSSPPSSSPESLGPGLLP) are compositionally biased toward low complexity. Phosphoserine is present on residues Ser845, Ser846, Ser864, Ser867, Ser919, Ser982, and Ser1000. Disordered stretches follow at residues 911–1225 (SKGS…VSEV) and 1288–1322 (DDMSSPPSPESTDSSPERDFPPNPILPPASLPQDS). Positions 919–931 (SDLEQEGLGEIEP) are enriched in acidic residues. Over residues 999 to 1008 (SSRSRSTSSS) the composition is skewed to low complexity. 2 stretches are compositionally biased toward basic residues: residues 1009-1030 (RSRKKTKKKKKKVAREHQRTRS) and 1053-1063 (RRHRAKTKSRR). A compositionally biased stretch (basic and acidic residues) spans 1064 to 1090 (SSSDRASSQDRAKRRKDRDDRDREHRR). Basic residues-rich tracts occupy residues 1091-1104 (GSWGHGRCRRKSRS) and 1119-1129 (SKRRKRRHSGS). Ser1135 carries the phosphoserine modification. Composition is skewed to basic and acidic residues over residues 1147-1161 (RSRERMDKQESVTRS) and 1182-1197 (PSREKRAHSPEKKGPV). Position 1201 is a phosphoserine (Ser1201). Residues 1288–1301 (DDMSSPPSPESTDS) show a composition bias toward low complexity. Over residues 1308-1317 (PPNPILPPAS) the composition is skewed to pro residues. Residues Ser1368 and Ser1379 each carry the phosphoserine modification. Phosphothreonine is present on Thr1412. Disordered regions lie at residues 1419–1445 (EHSTPAALDRDPRTPLQRPQRPQEGDW), 1463–1496 (LPPPIHVLQESGLPDADPSQPPGAPRAEGLPAAG), 1567–1588 (AVPTTNNSEERTATPKTAAEKT), and 1663–1682 (MRRHKKTEGGEEPPTQGAET). Over residues 1574-1588 (SEERTATPKTAAEKT) the composition is skewed to basic and acidic residues. A coiled-coil region spans residues 1585-1612 (AEKTKKEEYMKKLHMQERAVEEVKLAIK).

As to quaternary structure, interacts with POLR2A (via the C-terminal domain).

The protein is PHD and RING finger domain-containing protein 1 of Mus musculus (Mouse).